The following is a 108-amino-acid chain: Class I hydrophobin hgfII (108 aa).

A signal peptide spans 1–19; sequence MFSRIAAVSFLALPLLAAA. Cystine bridges form between Cys-28/Cys-89, Cys-35/Cys-83, Cys-36/Cys-69, and Cys-90/Cys-103. Residue Asn-92 is glycosylated (N-linked (GlcNAc...) asparagine).

This sequence belongs to the fungal hydrophobin family. As to quaternary structure, self-assembles to form functional amyloid fibrils called rodlets with a diameter of 15-30 nm. Self-assembly into fibrillar rodlets occurs spontaneously at hydrophobic:hydrophilic interfaces and the rodlets further associate laterally to form amphipathic monolayers. In terms of tissue distribution, highky expressed in hyphae cultured in liquid medium.

Its subcellular location is the secreted. The protein localises to the cell wall. In terms of biological role, aerial growth, conidiation, and dispersal of filamentous fungi in the environment rely upon a capability of their secreting small amphipathic proteins called hydrophobins (HPBs) with low sequence identity. Class I can self-assemble into an outermost layer of rodlet bundles on aerial cell surfaces, conferring cellular hydrophobicity that supports fungal growth, development and dispersal; whereas Class II form highly ordered films at water-air interfaces through intermolecular interactions but contribute nothing to the rodlet structure. HgfII is a class I hydrophobin that is involved in cell surface hydrophobicity and might play a key role during the growth and development of hyphae cultured in liquid medium. In Grifola frondosa (Maitake), this protein is Class I hydrophobin hgfII.